We begin with the raw amino-acid sequence, 1025 residues long: Multidrug resistance protein MdtC (1025 aa).

12 consecutive transmembrane segments (helical) span residues 15–35 (ILIS…LPVA), 333–353 (EVEQ…FLFL), 360–380 (LIPA…MYLC), 387–407 (LSLM…IVVL), 431–451 (VGFT…PLLL), 469–489 (VAIG…CGWL), 528–548 (LTGL…ISIP), 851–871 (AQVI…GVLY), 875–895 (VHPL…LLAL), 897–917 (IFDA…IGIV), 953–973 (PIMM…LSGG), and 984–1004 (ITIV…TPVV).

It belongs to the resistance-nodulation-cell division (RND) (TC 2.A.6) family. MdtC subfamily. Part of a tripartite efflux system composed of MdtA, MdtB and MdtC. MdtC forms a heteromultimer with MdtB.

Its subcellular location is the cell inner membrane. The chain is Multidrug resistance protein MdtC from Klebsiella pneumoniae subsp. pneumoniae (strain ATCC 700721 / MGH 78578).